The primary structure comprises 763 residues: Thiamine biosynthesis multifunctional protein ThiED (763 aa).

Residues 1 to 210 (MTDFSLYLVT…ANPAAAATRL (210 aa)) form a thiamine-phosphate synthase region. Residues 37-41 (QLRDK) and Asn-69 each bind 4-amino-2-methyl-5-(diphosphooxymethyl)pyrimidine. Mg(2+) is bound by residues Asp-70 and Asp-88. Position 107 (Ser-107) interacts with 4-amino-2-methyl-5-(diphosphooxymethyl)pyrimidine. 140 to 142 (TAT) contributes to the 2-[(2R,5Z)-2-carboxy-4-methylthiazol-5(2H)-ylidene]ethyl phosphate binding site. Residue Lys-143 coordinates 4-amino-2-methyl-5-(diphosphooxymethyl)pyrimidine. 2-[(2R,5Z)-2-carboxy-4-methylthiazol-5(2H)-ylidene]ethyl phosphate is bound by residues Gly-174 and 194 to 195 (VS). The tract at residues 245–500 (LSIAGTDPTG…GTGNGPVDHG (256 aa)) is hydroxymethylpyrimidine/phosphomethylpyrimidine kinase. Position 282 (Gln-282) interacts with 4-amino-5-hydroxymethyl-2-methylpyrimidine. The tract at residues 550–763 (FTRALWEASG…RHGWTMVGSS (214 aa)) is thiaminase-2.

In the N-terminal section; belongs to the thiamine-phosphate synthase family. It in the central section; belongs to the ThiD family. The protein in the C-terminal section; belongs to the thiaminase-2 family. Mg(2+) serves as cofactor.

The enzyme catalyses 2-[(2R,5Z)-2-carboxy-4-methylthiazol-5(2H)-ylidene]ethyl phosphate + 4-amino-2-methyl-5-(diphosphooxymethyl)pyrimidine + 2 H(+) = thiamine phosphate + CO2 + diphosphate. The catalysed reaction is 2-(2-carboxy-4-methylthiazol-5-yl)ethyl phosphate + 4-amino-2-methyl-5-(diphosphooxymethyl)pyrimidine + 2 H(+) = thiamine phosphate + CO2 + diphosphate. It catalyses the reaction 4-methyl-5-(2-phosphooxyethyl)-thiazole + 4-amino-2-methyl-5-(diphosphooxymethyl)pyrimidine + H(+) = thiamine phosphate + diphosphate. It carries out the reaction 4-amino-5-hydroxymethyl-2-methylpyrimidine + ATP = 4-amino-2-methyl-5-(phosphooxymethyl)pyrimidine + ADP + H(+). The enzyme catalyses 4-amino-2-methyl-5-(phosphooxymethyl)pyrimidine + ATP = 4-amino-2-methyl-5-(diphosphooxymethyl)pyrimidine + ADP. It functions in the pathway cofactor biosynthesis; thiamine diphosphate biosynthesis; 4-amino-2-methyl-5-diphosphomethylpyrimidine from 5-amino-1-(5-phospho-D-ribosyl)imidazole: step 3/3. Its pathway is cofactor biosynthesis; thiamine diphosphate biosynthesis; thiamine phosphate from 4-amino-2-methyl-5-diphosphomethylpyrimidine and 4-methyl-5-(2-phosphoethyl)-thiazole: step 1/1. Its function is as follows. Condenses 4-methyl-5-(beta-hydroxyethyl)thiazole monophosphate (THZ-P) and 2-methyl-4-amino-5-hydroxymethyl pyrimidine pyrophosphate (HMP-PP) to form thiamine monophosphate (TMP). Catalyzes the phosphorylation of hydroxymethylpyrimidine phosphate (HMP-P) to HMP-PP, and of HMP to HMP-P. The protein is Thiamine biosynthesis multifunctional protein ThiED (theD) of Corynebacterium glutamicum (strain ATCC 13032 / DSM 20300 / JCM 1318 / BCRC 11384 / CCUG 27702 / LMG 3730 / NBRC 12168 / NCIMB 10025 / NRRL B-2784 / 534).